Here is a 398-residue protein sequence, read N- to C-terminus: Elongation factor Tu (398 aa).

One can recognise a tr-type G domain in the interval 10–208 (KPHVNVGTIG…ALDDYIPEPE (199 aa)). Residues 19–26 (GHVDHGKT) form a G1 region. 19-26 (GHVDHGKT) contributes to the GTP binding site. Threonine 26 serves as a coordination point for Mg(2+). The interval 61-65 (GITIA) is G2. Positions 82-85 (DCPG) are G3. Residues 82–86 (DCPGH) and 137–140 (NKAD) each bind GTP. The tract at residues 137–140 (NKAD) is G4. Residues 175-177 (SAL) form a G5 region.

The protein belongs to the TRAFAC class translation factor GTPase superfamily. Classic translation factor GTPase family. EF-Tu/EF-1A subfamily. In terms of assembly, monomer.

Its subcellular location is the cytoplasm. It catalyses the reaction GTP + H2O = GDP + phosphate + H(+). GTP hydrolase that promotes the GTP-dependent binding of aminoacyl-tRNA to the A-site of ribosomes during protein biosynthesis. This chain is Elongation factor Tu, found in Marinobacter nauticus (strain ATCC 700491 / DSM 11845 / VT8) (Marinobacter aquaeolei).